A 115-amino-acid chain; its full sequence is Large ribosomal subunit protein bL19 (115 aa).

Belongs to the bacterial ribosomal protein bL19 family.

In terms of biological role, this protein is located at the 30S-50S ribosomal subunit interface and may play a role in the structure and function of the aminoacyl-tRNA binding site. In Lactobacillus delbrueckii subsp. bulgaricus (strain ATCC BAA-365 / Lb-18), this protein is Large ribosomal subunit protein bL19.